A 96-amino-acid polypeptide reads, in one-letter code: UPF0235 protein KPK_0722 (96 aa).

It belongs to the UPF0235 family.

This is UPF0235 protein KPK_0722 from Klebsiella pneumoniae (strain 342).